We begin with the raw amino-acid sequence, 403 residues long: Serine/threonine transporter SstT (403 aa).

9 consecutive transmembrane segments (helical) span residues 16–36 (QIVI…AIAL), 45–65 (FVSA…MASI), 79–99 (ILWL…VASM), 138–158 (ALLN…GVAL), 175–195 (GVTL…FGLV), 214–234 (LAVL…LIVF), 295–315 (MAGA…TLGI), 327–347 (MVAA…LLLI), and 353–373 (LFGI…IIGV).

This sequence belongs to the dicarboxylate/amino acid:cation symporter (DAACS) (TC 2.A.23) family.

It is found in the cell inner membrane. The enzyme catalyses L-serine(in) + Na(+)(in) = L-serine(out) + Na(+)(out). It catalyses the reaction L-threonine(in) + Na(+)(in) = L-threonine(out) + Na(+)(out). Involved in the import of serine and threonine into the cell, with the concomitant import of sodium (symport system). This chain is Serine/threonine transporter SstT, found in Pseudomonas putida (strain W619).